The primary structure comprises 1044 residues: Carbamoyl phosphate synthase large chain (1044 aa).

Residues 1 to 398 (MPKREDISKI…ALMKAIASLD (398 aa)) are carboxyphosphate synthetic domain. 12 residues coordinate ATP: Arg129, Arg169, Gly175, Gly176, Arg208, Leu210, Glu215, Gly241, Val242, His243, Gln284, and Glu296. The region spanning 133–325 (HDFLISIGER…IARIAAKIAV (193 aa)) is the ATP-grasp 1 domain. 3 residues coordinate Mg(2+): Gln284, Glu296, and Asn298. Mn(2+) contacts are provided by Gln284, Glu296, and Asn298. An oligomerization domain region spans residues 399–539 (IDLSYRLRLY…YSTYEDEDEL (141 aa)). The interval 540–916 (PGISGFVAII…AIRKSILRDI (377 aa)) is carbamoyl phosphate synthetic domain. The region spanning 665–854 (SKRLEAMGID…WVELAVSAIM (190 aa)) is the ATP-grasp 2 domain. Residues Arg701, Lys738, Leu740, Glu745, Gly770, Val771, His772, Ser773, Gln813, and Glu825 each coordinate ATP. Mg(2+) is bound by residues Gln813, Glu825, and Asn827. Positions 813, 825, and 827 each coordinate Mn(2+). One can recognise an MGS-like domain in the interval 911–1044 (SILRDIKSVF…IDYREISSYH (134 aa)). The interval 916–1044 (IKSVFISVRD…IDYREISSYH (129 aa)) is allosteric domain.

It belongs to the CarB family. In terms of assembly, composed of two chains; the small (or glutamine) chain promotes the hydrolysis of glutamine to ammonia, which is used by the large (or ammonia) chain to synthesize carbamoyl phosphate. Tetramer of heterodimers (alpha,beta)4. Requires Mg(2+) as cofactor. Mn(2+) serves as cofactor.

It carries out the reaction hydrogencarbonate + L-glutamine + 2 ATP + H2O = carbamoyl phosphate + L-glutamate + 2 ADP + phosphate + 2 H(+). The catalysed reaction is hydrogencarbonate + NH4(+) + 2 ATP = carbamoyl phosphate + 2 ADP + phosphate + 2 H(+). It functions in the pathway amino-acid biosynthesis; L-arginine biosynthesis; carbamoyl phosphate from bicarbonate: step 1/1. The protein operates within pyrimidine metabolism; UMP biosynthesis via de novo pathway; (S)-dihydroorotate from bicarbonate: step 1/3. In terms of biological role, large subunit of the glutamine-dependent carbamoyl phosphate synthetase (CPSase). CPSase catalyzes the formation of carbamoyl phosphate from the ammonia moiety of glutamine, carbonate, and phosphate donated by ATP, constituting the first step of 2 biosynthetic pathways, one leading to arginine and/or urea and the other to pyrimidine nucleotides. The large subunit (synthetase) binds the substrates ammonia (free or transferred from glutamine from the small subunit), hydrogencarbonate and ATP and carries out an ATP-coupled ligase reaction, activating hydrogencarbonate by forming carboxy phosphate which reacts with ammonia to form carbamoyl phosphate. This chain is Carbamoyl phosphate synthase large chain, found in Thermoplasma volcanium (strain ATCC 51530 / DSM 4299 / JCM 9571 / NBRC 15438 / GSS1).